Here is a 398-residue protein sequence, read N- to C-terminus: Signal-regulatory protein beta-1 isoform 3 (398 aa).

A signal peptide spans 1-29 (MPVPASWPHLPSPFLLMTLLLGRLTGVAG). Residues 30-371 (EEELQVIQPD…GPALASAAPL (342 aa)) are Extracellular-facing. An Ig-like V-type domain is found at 31–136 (EELQVIQPDK…SPDHVEFKSG (106 aa)). 2 cysteine pairs are disulfide-bonded: Cys54–Cys120 and Cys169–Cys227. 2 consecutive Ig-like C1-type domains span residues 147-246 (PSAP…ANLS) and 253-347 (PTLE…HDLK). Residues Asn244, Asn291, and Asn318 are each glycosylated (N-linked (GlcNAc...) asparagine). Cys272 and Cys330 are oxidised to a cystine. The span at 337–354 (QPAVSKSHDLKVSAHPKE) shows a compositional bias: basic and acidic residues. Positions 337 to 361 (QPAVSKSHDLKVSAHPKEQGSNTAP) are disordered. A helical membrane pass occupies residues 372-392 (LIAFLLGPKVLLVVGVSVIYV). Residues 393–398 (YWKQKA) are Cytoplasmic-facing.

The protein localises to the membrane. Functionally, immunoglobulin-like cell surface receptor involved in the negative regulation of receptor tyrosine kinase-coupled signaling processes. The protein is Signal-regulatory protein beta-1 isoform 3 (SIRPB1) of Homo sapiens (Human).